The primary structure comprises 130 residues: Protein ApaG (130 aa).

One can recognise an ApaG domain in the interval 3–127 (RALTKDIEVV…FSLDSPGLLR (125 aa)).

The protein is Protein ApaG of Rhizobium leguminosarum bv. trifolii (strain WSM2304).